Consider the following 1412-residue polypeptide: DNA-directed RNA polymerase subunit beta'' (1412 aa).

The Zn(2+) site is built by cysteine 220, cysteine 294, cysteine 301, and cysteine 304.

The protein belongs to the RNA polymerase beta' chain family. RpoC2 subfamily. As to quaternary structure, in plastids the minimal PEP RNA polymerase catalytic core is composed of four subunits: alpha, beta, beta', and beta''. When a (nuclear-encoded) sigma factor is associated with the core the holoenzyme is formed, which can initiate transcription. Zn(2+) serves as cofactor.

Its subcellular location is the plastid. It is found in the chloroplast. The enzyme catalyses RNA(n) + a ribonucleoside 5'-triphosphate = RNA(n+1) + diphosphate. In terms of biological role, DNA-dependent RNA polymerase catalyzes the transcription of DNA into RNA using the four ribonucleoside triphosphates as substrates. This Chara vulgaris (Common stonewort) protein is DNA-directed RNA polymerase subunit beta''.